We begin with the raw amino-acid sequence, 513 residues long: Putative ATP-dependent RNA helicase QP509L (513 aa).

Residues 110 to 262 (KKLLSPYGRF…KIIIHHLGQP (153 aa)) form the Helicase ATP-binding domain. 123–130 (LNTGLGKT) serves as a coordination point for ATP. Positions 215–218 (DEAH) match the DEAH box motif.

It belongs to the DEAD box helicase family. DEAH subfamily.

It carries out the reaction ATP + H2O = ADP + phosphate + H(+). This is Putative ATP-dependent RNA helicase QP509L from Ornithodoros (relapsing fever ticks).